The chain runs to 302 residues: Gamma-gliadin (302 aa).

The signal sequence occupies residues 1–19 (MKTLLILTILAMATTIATA). The segment at 27 to 159 (GQVQWPQQQP…QSFPQQQQPA (133 aa)) is disordered. The span at 42–102 (QPFCQQPQRT…PQPQQTFPQQ (61 aa)) shows a compositional bias: low complexity. A compositionally biased stretch (pro residues) spans 103 to 124 (PQLPFPQQPQQPFPQPQQPQQP). The segment covering 125–159 (FPQSQQPQQPFPQPQQQFPQPQQPQQSFPQQQQPA) has biased composition (low complexity).

The protein belongs to the gliadin/glutenin family.

Gliadin is the major seed storage protein in wheat. The sequence is that of Gamma-gliadin from Triticum aestivum (Wheat).